A 115-amino-acid polypeptide reads, in one-letter code: MSEQAAEPNLDGPLDEALEELVSAEDFLNFFGVPFVPSVVQVNRLHIMQRYHDYLCQAGDIEHLQDAVRYAVYRKLLVRAYEDFVASDAQTEKVFKVFHMHEPQTTFVPIDQLLG.

It belongs to the NifW family. Homotrimer; associates with NifD.

Functionally, may protect the nitrogenase Fe-Mo protein from oxidative damage. This chain is Nitrogenase-stabilizing/protective protein NifW, found in Stutzerimonas stutzeri (strain A1501) (Pseudomonas stutzeri).